A 218-amino-acid chain; its full sequence is Oxygen regulatory protein NreC (218 aa).

The 118-residue stretch at 2–119 (KIVIADDHAV…QLILAVRTVY (118 aa)) folds into the Response regulatory domain. Asp-53 carries the 4-aspartylphosphate modification. The HTH luxR-type domain maps to 149–214 (SSDPFKILSK…ELVEYALKKK (66 aa)). Positions 173 to 192 (NKDIAEKLFVSVKTVEAHKT) form a DNA-binding region, H-T-H motif.

In terms of processing, phosphorylated by NreB.

The protein localises to the cytoplasm. In terms of biological role, member of the two-component regulatory system NreB/NreC involved in the control of dissimilatory nitrate/nitrite reduction in response to oxygen. Phosphorylated NreC binds to a GC-rich palindromic sequence at the promoters of the nitrate (narGHJI) and nitrite (nir) reductase operons, as well as the putative nitrate transporter gene narT, and activates their expression. The sequence is that of Oxygen regulatory protein NreC (nreC) from Staphylococcus epidermidis (strain ATCC 12228 / FDA PCI 1200).